Here is a 331-residue protein sequence, read N- to C-terminus: tRNA uridine(34) hydroxylase (331 aa).

One can recognise a Rhodanese domain in the interval 122 to 218; the sequence is KENRCLVLDV…YGQAVGTGKW (97 aa). The active-site Cysteine persulfide intermediate is the Cys178.

This sequence belongs to the TrhO family.

The catalysed reaction is uridine(34) in tRNA + AH2 + O2 = 5-hydroxyuridine(34) in tRNA + A + H2O. Functionally, catalyzes oxygen-dependent 5-hydroxyuridine (ho5U) modification at position 34 in tRNAs. This Chlamydia caviae (strain ATCC VR-813 / DSM 19441 / 03DC25 / GPIC) (Chlamydophila caviae) protein is tRNA uridine(34) hydroxylase.